The sequence spans 663 residues: Transketolase 1 (663 aa).

His26 serves as a coordination point for substrate. At Lys46 the chain carries N6-acetyllysine. Thiamine diphosphate-binding positions include His66 and 114–116 (GPL). Asp155 provides a ligand contact to Mg(2+). 2 residues coordinate thiamine diphosphate: Gly156 and Asn185. Asn185 and Ile187 together coordinate Mg(2+). The substrate site is built by His261, Arg358, and Ser385. His261 provides a ligand contact to thiamine diphosphate. The active-site Proton donor is the Glu411. Phe437 lines the thiamine diphosphate pocket. 4 residues coordinate substrate: His461, Asp469, His473, and Arg520.

This sequence belongs to the transketolase family. As to quaternary structure, homodimer. The cofactor is Mg(2+). It depends on Ca(2+) as a cofactor. Requires Mn(2+) as cofactor. Co(2+) is required as a cofactor. Thiamine diphosphate serves as cofactor.

The catalysed reaction is D-sedoheptulose 7-phosphate + D-glyceraldehyde 3-phosphate = aldehydo-D-ribose 5-phosphate + D-xylulose 5-phosphate. In terms of biological role, catalyzes the transfer of a two-carbon ketol group from a ketose donor to an aldose acceptor, via a covalent intermediate with the cofactor thiamine pyrophosphate. Thus, catalyzes the reversible transfer of a two-carbon ketol group from sedoheptulose-7-phosphate to glyceraldehyde-3-phosphate, producing xylulose-5-phosphate and ribose-5-phosphate. In Escherichia coli (strain K12), this protein is Transketolase 1 (tktA).